The sequence spans 351 residues: ATP-dependent protease ATP-binding subunit-like protein (351 aa).

Residues 1 to 26 (MPYITDMLRDRNSAATPPAEERSEPV) are disordered. 79–86 (GPTGVGKT) contacts ATP.

Belongs to the ClpA/ClpB family.

The polypeptide is ATP-dependent protease ATP-binding subunit-like protein (Rhodococcus erythropolis (Arthrobacter picolinophilus)).